A 131-amino-acid chain; its full sequence is Colicin-N immunity protein (131 aa).

The next 2 membrane-spanning stretches (helical) occupy residues 66–84 (ILTP…FLLT) and 104–124 (VFVF…IFVL).

The protein resides in the cell membrane. The sequence is that of Colicin-N immunity protein (cni) from Escherichia coli.